An 894-amino-acid chain; its full sequence is Tyrosine-protein kinase receptor UFO (894 aa).

The N-terminal stretch at methionine 1–methionine 25 is a signal peptide. Positions alanine 26 to glutamate 92 are interaction with GAS6. Topologically, residues alanine 26–tryptophan 451 are extracellular. Ig-like C2-type domains are found at residues proline 27–serine 128 and proline 139–threonine 222. N-linked (GlcNAc...) asparagine glycosylation is present at asparagine 43. Cysteines 56 and 117 form a disulfide. N-linked (GlcNAc...) asparagine glycosylation is found at asparagine 157 and asparagine 198. Cysteine 160 and cysteine 205 are disulfide-bonded. Fibronectin type-III domains follow at residues glutamine 227–glycine 331 and proline 336–proline 428. Asparagine 339, asparagine 345, and asparagine 401 each carry an N-linked (GlcNAc...) asparagine glycan. A helical membrane pass occupies residues tyrosine 452–valine 472. The Cytoplasmic segment spans residues histidine 473–alanine 894. Residues valine 536 to leucine 807 form the Protein kinase domain. ATP is bound by residues leucine 542–valine 550 and lysine 567. Catalysis depends on aspartate 672, which acts as the Proton acceptor. 3 positions are modified to phosphotyrosine; by autocatalysis: tyrosine 703, tyrosine 779, and tyrosine 821. 2 disordered regions span residues asparagine 823–serine 853 and tyrosine 866–alanine 894. Position 866 is a phosphotyrosine; by autocatalysis (tyrosine 866). Phosphoserine is present on serine 884.

The protein belongs to the protein kinase superfamily. Tyr protein kinase family. AXL/UFO subfamily. Heterodimer and heterotetramer with ligand GAS6. Interacts with CBL, GRB2, LCK, NCK2, PIK3R1, PIK3R2, PIK3R3, PLCG1, SOCS1 and TNS2. Part of a complex including AXL, TNK2 and GRB2, in which GRB2 promotes AXL recruitment by TNK2. In terms of processing, monoubiquitinated upon GAS6-binding. A very small proportion of the receptor could be subjected to polyubiquitination in a very transient fashion. Post-translationally, phosphorylated at tyrosine residues by autocatalysis, which activates kinase activity. Highly expressed in metastatic colon tumors. Expressed in primary colon tumors. Weakly expressed in normal colon tissue.

The protein resides in the cell membrane. It carries out the reaction L-tyrosyl-[protein] + ATP = O-phospho-L-tyrosyl-[protein] + ADP + H(+). Activated by GAS6-binding and subsequent autophosphorylation. Receptor tyrosine kinase that transduces signals from the extracellular matrix into the cytoplasm by binding growth factor GAS6 and which is thus regulating many physiological processes including cell survival, cell proliferation, migration and differentiation. Ligand binding at the cell surface induces dimerization and autophosphorylation of AXL. Following activation by ligand, AXL binds and induces tyrosine phosphorylation of PI3-kinase subunits PIK3R1, PIK3R2 and PIK3R3; but also GRB2, PLCG1, LCK and PTPN11. Other downstream substrate candidates for AXL are CBL, NCK2, SOCS1 and TNS2. Recruitment of GRB2 and phosphatidylinositol 3 kinase regulatory subunits by AXL leads to the downstream activation of the AKT kinase. GAS6/AXL signaling plays a role in various processes such as endothelial cell survival during acidification by preventing apoptosis, optimal cytokine signaling during human natural killer cell development, hepatic regeneration, gonadotropin-releasing hormone neuron survival and migration, platelet activation, or regulation of thrombotic responses. Also plays an important role in inhibition of Toll-like receptors (TLRs)-mediated innate immune response. In terms of biological role, (Microbial infection) Acts as a receptor for lassa virus and lymphocytic choriomeningitis virus, possibly through GAS6 binding to phosphatidyl-serine at the surface of virion envelope. Its function is as follows. (Microbial infection) Acts as a receptor for Ebolavirus, possibly through GAS6 binding to phosphatidyl-serine at the surface of virion envelope. Functionally, (Microbial infection) Promotes Zika virus entry in glial cells, Sertoli cells and astrocytes. Additionally, Zika virus potentiates AXL kinase activity to antagonize type I interferon signaling and thereby promotes infection. Interferon signaling inhibition occurs via an SOCS1-dependent mechanism. This chain is Tyrosine-protein kinase receptor UFO (AXL), found in Homo sapiens (Human).